The sequence spans 1138 residues: Protein RECOGNITION OF PERONOSPORA PARASITICA 7 (1138 aa).

One can recognise an NB-ARC domain in the interval glutamate 166–glutamate 422. Glycine 189 to threonine 196 contributes to the ATP binding site. LRR repeat units lie at residues glutamine 544–valine 565, valine 566–leucine 581, glutamate 582–leucine 606, isoleucine 607–leucine 631, methionine 655–lysine 680, leucine 681–threonine 705, threonine 707–leucine 726, lysine 727–phenylalanine 752, histidine 754–proline 774, serine 775–lysine 797, leucine 798–glutamine 825, methionine 847–serine 871, leucine 873–leucine 893, valine 894–glutamine 918, methionine 940–glutamine 963, leucine 1028–cysteine 1050, phenylalanine 1055–methionine 1078, proline 1079–tyrosine 1103, and lysine 1115–aspartate 1138.

It belongs to the disease resistance NB-LRR family.

Functionally, disease resistance protein required for incompatible interactions with avirulent strains of Hyaloperonospora arabidopsidis (downy mildew), isolate Hpa-Hiks1 in cv. Columbia. The chain is Protein RECOGNITION OF PERONOSPORA PARASITICA 7 from Arabidopsis thaliana (Mouse-ear cress).